A 205-amino-acid polypeptide reads, in one-letter code: Large ribosomal subunit protein uL3 (205 aa).

Residues 126-150 (GGPKTHGQSDRHRAPGSISSTTTPG) are disordered.

Belongs to the universal ribosomal protein uL3 family. As to quaternary structure, part of the 50S ribosomal subunit. Forms a cluster with proteins L14 and L19.

In terms of biological role, one of the primary rRNA binding proteins, it binds directly near the 3'-end of the 23S rRNA, where it nucleates assembly of the 50S subunit. In Dehalococcoides mccartyi (strain ATCC BAA-2266 / KCTC 15142 / 195) (Dehalococcoides ethenogenes (strain 195)), this protein is Large ribosomal subunit protein uL3.